Consider the following 1442-residue polypeptide: Chitin synthase regulator SKT5 (1442 aa).

2 disordered regions span residues 1-54 (MTHP…SPTL) and 72-117 (LALK…RHLQ). Over residues 12 to 25 (NGKEPEKEEPRCVH) the composition is skewed to basic and acidic residues. Residues 39 to 53 (KSSSAITNENVSSPT) are compositionally biased toward polar residues. Over residues 75 to 99 (KEPENGKNKHPDSEQDDGDMKEQRS) the composition is skewed to basic and acidic residues. 7 Sel1-like repeats span residues 198–236 (VESQYLAGDCCMNGYGMSKGRPDLGLAYSYFVQAGKRGH), 237–272 (PDAAYRAGTCYEKGWGCRRDPAKAVQFYKMAASRKH), 273–309 (PGAQYRLGTAELNGELGLKRLAREGVKWLKRSAENAT), 313–350 (PHALHELALLHEKGIYNVLFVDNEYSCELLAQAVEMGY), 351–387 (APSAYKLGVNYEYGRMGCPQDSGLSIHMYNIAAQQNH), 388–425 (KEACFALTSWYLVGVPGILPQSDTEAYLWAKRAAEQGL), and 426–461 (AKAEYACGYFCENGIGTPRDLGEAKGWYQRAVEHGD). Positions 550–1402 (EKPKTATPTS…FSTPDSSSSK (853 aa)) are disordered. The segment covering 605–617 (PKPPTPPPPPPPE) has biased composition (pro residues). Residues 633 to 648 (FKSRLLRLGKMGKIRK) show a composition bias toward basic residues. Residues 747-758 (GPSSAAGADGAP) show a composition bias toward low complexity. 3 stretches are compositionally biased toward basic and acidic residues: residues 762–804 (GEPK…KSEK), 821–840 (GSDKPGSEDKKNQEVPKPSD), and 859–875 (RPDEKNSSLVERSKDSE). Low complexity predominate over residues 876 to 891 (STSPSSPKPTTGSAEP). Composition is skewed to pro residues over residues 964–977 (PFPPGARPGMPPNA), 1139–1158 (RPGPRPFSPTFPSPAGPSRP), and 1200–1220 (AMQPGRPPSPSSPFGRPPTGP). Positions 1232-1243 (PSQSSMHQSGNG) are enriched in polar residues. Positions 1271–1282 (PRPPRPTSPPPF) are enriched in pro residues. The segment covering 1295 to 1305 (RGVMPPGSGPS) has biased composition (low complexity). 2 stretches are compositionally biased toward pro residues: residues 1306–1322 (MRPPQPPAIIPPPPRSP) and 1371–1386 (DRPPFAPPTHVTPPKT). Residues 1392–1402 (GFSTPDSSSSK) show a composition bias toward polar residues.

It belongs to the SKT5 family.

It localises to the cell membrane. Its function is as follows. Activator of the chitin synthase CHS3 which polymerizes chitin, a structural polymer of the fungal cell wall. The sequence is that of Chitin synthase regulator SKT5 from Malassezia restricta (strain ATCC 96810 / NBRC 103918 / CBS 7877) (Seborrheic dermatitis infection agent).